A 78-amino-acid chain; its full sequence is uncharacterized protein (78 aa).

The segment at 58–78 (EANDPEKKIPSTAAKAISLSP) is disordered.

This is an uncharacterized protein from Vaccinia virus (strain Copenhagen) (VACV).